The following is a 1034-amino-acid chain: Isoleucine--tRNA ligase (1034 aa).

Positions 46 to 56 (PYCSGAIHLGT) match the 'HIGH' region motif. The 'KMSKS' region signature appears at 598-602 (KMSKS). ATP is bound at residue Lys601.

The protein belongs to the class-I aminoacyl-tRNA synthetase family. IleS type 2 subfamily. Monomer. Zn(2+) is required as a cofactor.

The protein resides in the cytoplasm. It carries out the reaction tRNA(Ile) + L-isoleucine + ATP = L-isoleucyl-tRNA(Ile) + AMP + diphosphate. In terms of biological role, catalyzes the attachment of isoleucine to tRNA(Ile). As IleRS can inadvertently accommodate and process structurally similar amino acids such as valine, to avoid such errors it has two additional distinct tRNA(Ile)-dependent editing activities. One activity is designated as 'pretransfer' editing and involves the hydrolysis of activated Val-AMP. The other activity is designated 'posttransfer' editing and involves deacylation of mischarged Val-tRNA(Ile). In Methanococcus maripaludis (strain DSM 14266 / JCM 13030 / NBRC 101832 / S2 / LL), this protein is Isoleucine--tRNA ligase.